Here is a 177-residue protein sequence, read N- to C-terminus: Large ribosomal subunit protein uL6 (177 aa).

The protein belongs to the universal ribosomal protein uL6 family. As to quaternary structure, part of the 50S ribosomal subunit.

Its function is as follows. This protein binds to the 23S rRNA, and is important in its secondary structure. It is located near the subunit interface in the base of the L7/L12 stalk, and near the tRNA binding site of the peptidyltransferase center. This chain is Large ribosomal subunit protein uL6, found in Saccharophagus degradans (strain 2-40 / ATCC 43961 / DSM 17024).